The chain runs to 1113 residues: StAR-related lipid transfer protein 13 (1113 aa).

N-acetylmethionine is present on M1. An SAM domain is found at 55-122; that stretch reads QQEIEAKEAC…LNKCASMKLD (68 aa). Disordered regions lie at residues 162–254 and 307–346; these read LLPR…PTRA and PNGD…VSTP. Polar residues predominate over residues 177–188; the sequence is MRNTTSSESVLT. Composition is skewed to low complexity over residues 197–213 and 326–344; these read SIHS…SQPG and SGKS…SGVS. Phosphoserine is present on S411. Positions 536–549 are enriched in polar residues; sequence FEGNSVSEGRTTPS. The segment at 536 to 580 is disordered; that stretch reads FEGNSVSEGRTTPSDVERDVTSLNESEPPGVRDRRDSGVGASLTR. Residues 663–868 form the Rho-GAP domain; it reads VPLIVHVQRT…HMIMECDRLF (206 aa). Residues 899–1107 form the START domain; the sequence is LEESGATFHT…RNSFQPLIAE (209 aa).

As to quaternary structure, homodimer. Interacts with TAX1BP1. As to expression, ubiquitously expressed. Underexpressed in hepatocellular carcinoma cells and some breast cancer cell lines.

Its subcellular location is the cytoplasm. The protein resides in the membrane. It localises to the mitochondrion membrane. The protein localises to the lipid droplet. GTPase-activating protein for RhoA, and perhaps for Cdc42. May be involved in regulation of cytoskeletal reorganization, cell proliferation and cell motility. Acts a tumor suppressor in hepatocellular carcinoma cells. This is StAR-related lipid transfer protein 13 (STARD13) from Homo sapiens (Human).